A 389-amino-acid chain; its full sequence is GTPase Obg (389 aa).

Positions 1-159 constitute an Obg domain; the sequence is MKFVDEAVIR…RSLKLELLLL (159 aa). One can recognise an OBG-type G domain in the interval 160–333; it reads ADVGLLGMPN…LALKLLDYIA (174 aa). Residues 166–173, 191–195, 213–216, 283–286, and 314–316 each bind GTP; these read GMPNAGKS, FTTLV, DIPG, NKTD, and SAY. Positions 173 and 193 each coordinate Mg(2+).

This sequence belongs to the TRAFAC class OBG-HflX-like GTPase superfamily. OBG GTPase family. Monomer. Mg(2+) serves as cofactor.

It localises to the cytoplasm. Functionally, an essential GTPase which binds GTP, GDP and possibly (p)ppGpp with moderate affinity, with high nucleotide exchange rates and a fairly low GTP hydrolysis rate. Plays a role in control of the cell cycle, stress response, ribosome biogenesis and in those bacteria that undergo differentiation, in morphogenesis control. This chain is GTPase Obg, found in Shewanella baltica (strain OS223).